Here is a 204-residue protein sequence, read N- to C-terminus: Pyrrolidone-carboxylate peptidase (204 aa).

Catalysis depends on residues E78, C141, and H165.

Belongs to the peptidase C15 family. Homotetramer.

The protein resides in the cytoplasm. The enzyme catalyses Release of an N-terminal pyroglutamyl group from a polypeptide, the second amino acid generally not being Pro.. Removes 5-oxoproline from various penultimate amino acid residues except L-proline. This chain is Pyrrolidone-carboxylate peptidase, found in Levilactobacillus brevis (strain ATCC 367 / BCRC 12310 / CIP 105137 / JCM 1170 / LMG 11437 / NCIMB 947 / NCTC 947) (Lactobacillus brevis).